Here is a 62-residue protein sequence, read N- to C-terminus: Photosystem II reaction center protein Z (62 aa).

Helical transmembrane passes span 8 to 28 and 41 to 61; these read ALAA…VAYA and FLGS…NFLV.

This sequence belongs to the PsbZ family. In terms of assembly, PSII is composed of 1 copy each of membrane proteins PsbA, PsbB, PsbC, PsbD, PsbE, PsbF, PsbH, PsbI, PsbJ, PsbK, PsbL, PsbM, PsbT, PsbX, PsbY, PsbZ, Psb30/Ycf12, peripheral proteins PsbO, CyanoQ (PsbQ), PsbU, PsbV and a large number of cofactors. It forms dimeric complexes.

The protein localises to the cellular thylakoid membrane. Its function is as follows. May control the interaction of photosystem II (PSII) cores with the light-harvesting antenna, regulates electron flow through the 2 photosystem reaction centers. PSII is a light-driven water plastoquinone oxidoreductase, using light energy to abstract electrons from H(2)O, generating a proton gradient subsequently used for ATP formation. The sequence is that of Photosystem II reaction center protein Z from Cyanothece sp. (strain PCC 7425 / ATCC 29141).